The chain runs to 400 residues: Dual specificity mitogen-activated protein kinase kinase 2 (400 aa).

M1 carries the N-acetylmethionine modification. Residue S23 is modified to Phosphoserine. Positions 72 to 369 (FERISELGAG…LKMLTNHTFI (298 aa)) constitute a Protein kinase domain. Residues 78–86 (LGAGNGGVV) and K101 contribute to the ATP site. D194 (proton acceptor) is an active-site residue. 2 positions are modified to (Microbial infection) O-acetylserine; by Yersinia YopJ; alternate: S222 and S226. S222 carries the phosphoserine; by RAF; alternate modification. S226 carries the post-translational modification Phosphoserine; alternate. Positions 286 to 310 (GEEGEPHSISPRPRPPGRPVSGHGM) are disordered. S293, S295, and S306 each carry phosphoserine. Phosphothreonine occurs at positions 394 and 396.

The protein belongs to the protein kinase superfamily. STE Ser/Thr protein kinase family. MAP kinase kinase subfamily. In terms of assembly, interacts with MORG1. Interacts with SGK1. Interacts with KSR1. Interacts with KSR1 and BRAF; the interaction with KSR1 mediates KSR1-BRAF dimerization. Interacts with GLS. Mg(2+) serves as cofactor. MAPKK is itself dependent on Ser/Thr phosphorylation for activity catalyzed by MAP kinase kinase kinases (RAF or MEKK1). Phosphorylated by MAP2K1/MEK1. In terms of processing, (Microbial infection) Acetylation of Ser-222 and Ser-226 by Yersinia YopJ prevents phosphorylation and activation, thus blocking the MAPK signaling pathway.

The protein resides in the cytoplasm. It localises to the membrane. The catalysed reaction is L-seryl-[protein] + ATP = O-phospho-L-seryl-[protein] + ADP + H(+). The enzyme catalyses L-threonyl-[protein] + ATP = O-phospho-L-threonyl-[protein] + ADP + H(+). It catalyses the reaction L-tyrosyl-[protein] + ATP = O-phospho-L-tyrosyl-[protein] + ADP + H(+). In terms of biological role, catalyzes the concomitant phosphorylation of a threonine and a tyrosine residue in a Thr-Glu-Tyr sequence located in MAP kinases. Activates the ERK1 and ERK2 MAP kinases. Activates BRAF in a KSR1 or KSR2-dependent manner; by binding to KSR1 or KSR2 releases the inhibitory intramolecular interaction between KSR1 or KSR2 protein kinase and N-terminal domains which promotes KSR1 or KSR2-BRAF dimerization and BRAF activation. The sequence is that of Dual specificity mitogen-activated protein kinase kinase 2 (MAP2K2) from Homo sapiens (Human).